Here is a 119-residue protein sequence, read N- to C-terminus: Immunoglobulin heavy variable 2-5 (119 aa).

An N-terminal signal peptide occupies residues 1-19; that stretch reads MDTLCSTLLLLTIPSWVLS. Glutamine 20 carries the pyrrolidone carboxylic acid modification. The segment at 20-44 is framework-1; that stretch reads QITLKESGPTLVKPTQTLTLTCTFS. Residues 20–119 enclose the Ig-like domain; that stretch reads QITLKESGPT…DTATYYCAHR (100 aa). The cysteines at positions 41 and 116 are disulfide-linked. The tract at residues 45–54 is complementarity-determining-1; that stretch reads GFSLSTSGVG. A framework-2 region spans residues 55 to 71; that stretch reads VGWIRQPPGKALEWLAL. The tract at residues 72 to 78 is complementarity-determining-2; that stretch reads IYWDDDK. Residues 79–116 are framework-3; sequence RYSPSLKSRLTITKDTSKNQVVLTMTNMDPVDTATYYC. The tract at residues 117-119 is complementarity-determining-3; the sequence is AHR.

As to quaternary structure, immunoglobulins are composed of two identical heavy chains and two identical light chains; disulfide-linked.

Its subcellular location is the secreted. The protein resides in the cell membrane. V region of the variable domain of immunoglobulin heavy chains that participates in the antigen recognition. Immunoglobulins, also known as antibodies, are membrane-bound or secreted glycoproteins produced by B lymphocytes. In the recognition phase of humoral immunity, the membrane-bound immunoglobulins serve as receptors which, upon binding of a specific antigen, trigger the clonal expansion and differentiation of B lymphocytes into immunoglobulins-secreting plasma cells. Secreted immunoglobulins mediate the effector phase of humoral immunity, which results in the elimination of bound antigens. The antigen binding site is formed by the variable domain of one heavy chain, together with that of its associated light chain. Thus, each immunoglobulin has two antigen binding sites with remarkable affinity for a particular antigen. The variable domains are assembled by a process called V-(D)-J rearrangement and can then be subjected to somatic hypermutations which, after exposure to antigen and selection, allow affinity maturation for a particular antigen. The chain is Immunoglobulin heavy variable 2-5 from Homo sapiens (Human).